The sequence spans 551 residues: Adenylosuccinate synthetase (551 aa).

Residues 131-137 (GDEGKGK) and 159-161 (GHT) contribute to the GTP site. The active-site Proton acceptor is Asp132. Asp132 and Gly159 together coordinate Mg(2+). Residues 132-135 (DEGK), 157-160 (NAGH), Thr248, Arg262, Asn339, Thr354, and Arg418 each bind IMP. Residue His160 is the Proton donor of the active site. 414 to 420 (TTTGRAR) contacts substrate. GTP contacts are provided by residues Arg420, 446-448 (KLD), and 528-530 (GVG).

This sequence belongs to the adenylosuccinate synthetase family. In terms of assembly, homodimer. Mg(2+) serves as cofactor.

Its subcellular location is the cytoplasm. It catalyses the reaction IMP + L-aspartate + GTP = N(6)-(1,2-dicarboxyethyl)-AMP + GDP + phosphate + 2 H(+). Its pathway is purine metabolism; AMP biosynthesis via de novo pathway; AMP from IMP: step 1/2. Its function is as follows. Plays an important role in the de novo pathway and in the salvage pathway of purine nucleotide biosynthesis. Catalyzes the first committed step in the biosynthesis of AMP from IMP. In Phytophthora infestans (strain T30-4) (Potato late blight agent), this protein is Adenylosuccinate synthetase.